The sequence spans 89 residues: MALQHDVKQEIINTYQIHGTDTGSTDVQVAILTERIKQLSEHLKVNKKDHASRRGLLKIIGRRKRLLAYLYRHDPQRYQQLIERLGIRG.

The protein belongs to the universal ribosomal protein uS15 family. As to quaternary structure, part of the 30S ribosomal subunit. Forms a bridge to the 50S subunit in the 70S ribosome, contacting the 23S rRNA.

Functionally, one of the primary rRNA binding proteins, it binds directly to 16S rRNA where it helps nucleate assembly of the platform of the 30S subunit by binding and bridging several RNA helices of the 16S rRNA. In terms of biological role, forms an intersubunit bridge (bridge B4) with the 23S rRNA of the 50S subunit in the ribosome. This Thermosynechococcus vestitus (strain NIES-2133 / IAM M-273 / BP-1) protein is Small ribosomal subunit protein uS15.